The sequence spans 810 residues: MSNEPESSDSKTKKDFSTAILERKKSPNRLVVDEAINDDNSVVSLHPTTMEKLQLFRGDTILIKGKKRKDTVCIALADETCEEPKIRMNKVVRSNLRVRLGDVISVHQCPDVKYGKRVHILPVDDTVEGVTGNLFDAYLKPYFLEAYRPVRKGDLFLVRGGMRSVEFKVIETDPAEYCVVAPDTEIFCEGEPVKREDEERLDEVGYDDVGGVRKQMAQIRELVELPLRHPQLFKSIGVKPPKGILLYGPPGSGKTLIARAVANETGAFFFCINGPEIMSKLAGESESNLRKAFEEAEKNAPSIIFIDEIDSIAPKREKTNGEVERRIVSQLLTLMDGLKSRAHVIVMGATNRPNSIDPALRRFGRFDREIDIGVPDEIGRLEVLRIHTKNMKLAEDVDLERISKDTHGYVGADLAALCTEAALQCIREKMDVIDLEDDSIDAEILNSMAVSNEHFHTALGNSNPSALRETVVEVPNVSWEDIGGLENVKRELQETVQYPVEHPEKFEKFGMSPSKGVLFYGPPGCGKTLLAKAIANECQANFISVKGPELLTMWFGESEANVREIFDKARQSAPCVLFFDELDSIATQRGNSAGDAGGAADRVLNQLLTEMDGMNAKKTVFIIGATNRPDIIDSALLRPGRLDQLIYIPLPDEDSRLNIFKACLRKSPVAKDVDVTALAKYTQGFSGADITEICQRACKYAIRENIEKDIENERRRSQNPEAMEEDMVDDEVSEIRAAHFEESMKYARRSVSDADIRKYQAFAQTLQQSRGFGSEFRFDSTAGVGRTTGVAAADPFATSAAAADDDDLYS.

Position 2 is an N-acetylserine (serine 2). A Phosphoserine modification is found at serine 41. Residues 248 to 255 (GPPGSGKT) and 521 to 528 (GPPGCGKT) each bind ATP.

It belongs to the AAA ATPase family.

The protein localises to the nucleus. It localises to the cytoplasm. The protein resides in the cytoskeleton. Its subcellular location is the phragmoplast. Its function is as follows. Probably functions in cell division and growth processes. Interacts with certain SNAREs as part of specialized membrane fusion events where vesicles from the same organelle fuse (homotypic fusion). This Arabidopsis thaliana (Mouse-ear cress) protein is Cell division control protein 48 homolog E (CDC48E).